The following is a 252-amino-acid chain: Phosphoglycolate phosphatase (252 aa).

Residue Asp-13 is the Nucleophile of the active site. Residues Asp-13, Asp-15, and Asp-192 each coordinate Mg(2+).

The protein belongs to the HAD-like hydrolase superfamily. CbbY/CbbZ/Gph/YieH family. As to quaternary structure, monomer. Mg(2+) serves as cofactor. It depends on chloride as a cofactor.

It catalyses the reaction 2-phosphoglycolate + H2O = glycolate + phosphate. The protein operates within organic acid metabolism; glycolate biosynthesis; glycolate from 2-phosphoglycolate: step 1/1. Functionally, specifically catalyzes the dephosphorylation of 2-phosphoglycolate. Is involved in the dissimilation of the intracellular 2-phosphoglycolate formed during the DNA repair of 3'-phosphoglycolate ends, a major class of DNA lesions induced by oxidative stress. The protein is Phosphoglycolate phosphatase of Escherichia coli O157:H7.